A 1456-amino-acid chain; its full sequence is Leucine-rich repeat-containing protein 9 (1456 aa).

8 LRR repeats span residues 53 to 78, 97 to 119, 120 to 141, 142 to 164, 166 to 188, 190 to 212, 224 to 248, and 264 to 287; these read FHNL…CLQL, CRNL…LEKL, IKLE…LQTL, KNLK…LDPN, QLEK…NLTK, TRLK…QLCN, LQRL…AMKK, and NEEL…RIKL. Residues 305–325 form a disordered region; the sequence is SSKGQSDTTPEAEKPRNSEVV. One copy of the LRR 9 repeat lies at 339-362; it reads LSALDDRVTFWNKKLHEIEAIYRT. The residue at position 525 (Y525) is a Phosphotyrosine. LRR repeat units lie at residues 661–683, 684–705, 706–727, 729–748, 749–772, 776–802, 806–833, 876–898, 899–920, 921–942, 943–965, 967–991, 993–1010, 1013–1037, 1082–1105, 1106–1128, 1129–1151, 1191–1214, 1215–1237, 1238–1260, 1262–1283, 1284–1307, and 1309–1335; these read KPRP…TNIY, SHIV…LAKL, TGLR…VYHL, NLEY…GFRG, LMKL…INVL, TTSL…VIGR, LTHL…KITQ, YSKI…LEKL, ENLK…LESC, VNLE…ITRL, TKLS…TFDN, LHLH…TFTL, ELYI…IYNL, LCNL…RFFV, FIQM…PVDH, FRNV…LIYL, PNVK…LKPQ, MQSL…QLNR, LRNL…LDNL, IVLQ…AFSK, SSLL…LQSL, VKLE…KLDV, and PSLR…IFRL.

The sequence is that of Leucine-rich repeat-containing protein 9 (Lrrc9) from Mus musculus (Mouse).